The primary structure comprises 108 residues: Nitrogenase-stabilizing/protective protein NifW (108 aa).

The protein belongs to the NifW family. Homotrimer; associates with NifD.

May protect the nitrogenase Fe-Mo protein from oxidative damage. This Zymomonas mobilis subsp. mobilis (strain ATCC 31821 / ZM4 / CP4) protein is Nitrogenase-stabilizing/protective protein NifW.